The following is a 493-amino-acid chain: Alpha-amylase-related protein (493 aa).

The N-terminal stretch at 1–19 is a signal peptide; that stretch reads MFKFALTLTLCLAGSLSLA. Gln20 carries the post-translational modification Pyrrolidone carboxylic acid. A disulfide bond links Cys47 and Cys103. 3 residues coordinate Ca(2+): Asn117, Gln168, and Asp177. Cys156 and Cys170 form a disulfide bridge. Arg205 provides a ligand contact to chloride. Asp207 functions as the Nucleophile in the catalytic mechanism. His211 contributes to the Ca(2+) binding site. Glu244 acts as the Proton donor in catalysis. Asn307 and Arg342 together coordinate chloride. 3 disulfide bridges follow: Cys375–Cys381, Cys417–Cys440, and Cys447–Cys459.

The protein belongs to the glycosyl hydrolase 13 family. As to quaternary structure, monomer. Requires Ca(2+) as cofactor. The cofactor is chloride.

It is found in the secreted. It catalyses the reaction Endohydrolysis of (1-&gt;4)-alpha-D-glucosidic linkages in polysaccharides containing three or more (1-&gt;4)-alpha-linked D-glucose units.. The chain is Alpha-amylase-related protein (Amyrel) from Drosophila sechellia (Fruit fly).